A 256-amino-acid chain; its full sequence is Pimeloyl-[acyl-carrier protein] methyl ester esterase (256 aa).

The AB hydrolase-1 domain occupies 15 to 242; sequence HLVLLHGWGL…AAHAPFISHP (228 aa). Substrate contacts are provided by residues Trp22, 82–83, and 143–147; these read SL and FLALQ. The active-site Nucleophile is Ser82. Catalysis depends on residues Asp207 and His235. His235 lines the substrate pocket.

The protein belongs to the AB hydrolase superfamily. Carboxylesterase BioH family. In terms of assembly, monomer.

Its subcellular location is the cytoplasm. It catalyses the reaction 6-carboxyhexanoyl-[ACP] methyl ester + H2O = 6-carboxyhexanoyl-[ACP] + methanol + H(+). It participates in cofactor biosynthesis; biotin biosynthesis. Functionally, the physiological role of BioH is to remove the methyl group introduced by BioC when the pimeloyl moiety is complete. It allows to synthesize pimeloyl-ACP via the fatty acid synthetic pathway through the hydrolysis of the ester bonds of pimeloyl-ACP esters. The sequence is that of Pimeloyl-[acyl-carrier protein] methyl ester esterase from Shigella boydii serotype 4 (strain Sb227).